Reading from the N-terminus, the 324-residue chain is Probable uridine nucleosidase 1 (324 aa).

His248 is a catalytic residue.

The protein belongs to the IUNH family.

The protein resides in the cytoplasm. It catalyses the reaction uridine + H2O = D-ribose + uracil. Its function is as follows. Involved in pyrimidine breakdown. This chain is Probable uridine nucleosidase 1 (URH1), found in Oryza sativa subsp. japonica (Rice).